The sequence spans 328 residues: Ethanol acetyltransferase 1 (328 aa).

One can recognise an AB hydrolase-1 domain in the interval 39–309 (PAIINIHGLL…TGHNLLLENP (271 aa)). Active-site charge relay system residues include Ser115, Asp139, and His302.

It belongs to the AB hydrolase superfamily.

Its subcellular location is the mitochondrion. The enzyme catalyses ethanol + acetyl-CoA = ethyl acetate + CoA. It catalyses the reaction acetyl-CoA + H2O = acetate + CoA + H(+). The catalysed reaction is ethyl acetate + H2O = ethanol + acetate + H(+). Its function is as follows. Alcohol acetyltransferase that catalyzes the synthesis of ethyl acetate from ethanol and acetyl-CoA. Can also function as a thioesterase by hydrolyzing acetyl-CoA in the absence of ethanol, as well as esterase hydrolyzing ethyl acetate. In Saccharomyces cerevisiae (strain ATCC 204508 / S288c) (Baker's yeast), this protein is Ethanol acetyltransferase 1.